The following is a 334-amino-acid chain: Putative violet-sensitive opsin (334 aa).

Topologically, residues 1-29 (MGKYFYLYENISKVGPYDGPQYYLAPTWA) are extracellular. N-linked (GlcNAc...) asparagine glycosylation is present at asparagine 10. The helical transmembrane segment at 30 to 54 (FYLQAAFMGFVFFVGTPLNFVVLLA) threads the bilayer. Residues 55–66 (TAKYKKLRVPLN) are Cytoplasmic-facing. Residues 67 to 88 (YILVNITFAGFIFVTFSVSQVF) traverse the membrane as a helical segment. The Extracellular segment spans residues 89–106 (LASVRGYYFFGQTLCALE). Cysteine 103 and cysteine 179 are oxidised to a cystine. A helical transmembrane segment spans residues 107-126 (AAVGAVAGLVTSWSLAVLSF). At 127–145 (ERYLVICKPFGAFKFGSNH) the chain is on the cytoplasmic side. A helical membrane pass occupies residues 146–168 (ALAAVIFTWFMGVVRCPPFFGWS). The Extracellular segment spans residues 169–194 (RYIPEGLGCSCGPDWYTNCEEFSCAS). The chain crosses the membrane as a helical span at residues 195 to 222 (YSKFLLVTCFICPITIIIFSYSQLLGAL). Topologically, residues 223 to 244 (RAVAAQQAESASTQKAEKEVSR) are cytoplasmic. Residues 245–272 (MIIVMVASFVTCYGPYALTAQYYAYSQD) traverse the membrane as a helical segment. Over 273–279 (ENKDYRL) the chain is Extracellular. Residues 280–301 (VTIPAFFSKSSCVYNPLIYAFM) form a helical membrane-spanning segment. Residue lysine 288 is modified to N6-(retinylidene)lysine. At 302–334 (NKQFNGCIMEMVFGKKMEEASEVSSKTEVSTDS) the chain is on the cytoplasmic side.

Belongs to the G-protein coupled receptor 1 family. Opsin subfamily. Phosphorylated on some or all of the serine and threonine residues present in the C-terminal region. As to expression, the three color pigments are found in the cone photoreceptor cells.

The protein resides in the membrane. Visual pigments are the light-absorbing molecules that mediate vision. They consist of an apoprotein, opsin, covalently linked to cis-retinal. In Oryzias latipes (Japanese rice fish), this protein is Putative violet-sensitive opsin.